A 357-amino-acid chain; its full sequence is Protein RecA (357 aa).

Residue 67 to 74 (GPESSGKT) participates in ATP binding. Positions 335–357 (LASSASDDESTEGNIDLETGEIF) are disordered.

The protein belongs to the RecA family.

Its subcellular location is the cytoplasm. In terms of biological role, can catalyze the hydrolysis of ATP in the presence of single-stranded DNA, the ATP-dependent uptake of single-stranded DNA by duplex DNA, and the ATP-dependent hybridization of homologous single-stranded DNAs. It interacts with LexA causing its activation and leading to its autocatalytic cleavage. This Shewanella putrefaciens (strain CN-32 / ATCC BAA-453) protein is Protein RecA.